Here is a 359-residue protein sequence, read N- to C-terminus: DNA-directed RNA polymerase RPB3-11 homolog (359 aa).

It in the N-terminal section; belongs to the archaeal RpoD/eukaryotic RPB3 RNA polymerase subunit family. The protein in the C-terminal section; belongs to the archaeal RpoL/eukaryotic RPB11/RPC19 RNA polymerase subunit family. Part of the viral DNA-directed RNA polymerase that consists of 8 polII-like subunits (RPB1, RPB2, RPB3, RPB5, RPB6, RPB7, RPB9, RPB10), a capping enzyme and a termination factor.

The protein resides in the host cytoplasm. It localises to the virion. Functionally, component of the DNA-directed RNA polymerase (RNAP) that catalyzes the transcription in the cytoplasm of viral DNA into RNA using the four ribonucleoside triphosphates as substrates. The sequence is that of DNA-directed RNA polymerase RPB3-11 homolog from Ornithodoros (relapsing fever ticks).